We begin with the raw amino-acid sequence, 182 residues long: UPF0397 protein BCE_2667 (182 aa).

A run of 5 helical transmembrane segments spans residues 9 to 29 (VVAI…GFSI), 40 to 60 (AILT…IGLI), 71 to 91 (WGIW…MGLI), 114 to 134 (ITGL…DIIV), and 142 to 162 (IVIQ…VLGL).

The protein belongs to the UPF0397 family.

It is found in the cell membrane. The protein is UPF0397 protein BCE_2667 of Bacillus cereus (strain ATCC 10987 / NRS 248).